The primary structure comprises 241 residues: L-aspartate dehydrogenase (241 aa).

NAD(+)-binding positions include 10-11 (NI), D28, 56-57 (AS), 63-64 (EY), 78-79 (IS), A109, and N164. Residue H193 is part of the active site.

This sequence belongs to the L-aspartate dehydrogenase family. Homodimer.

It catalyses the reaction L-aspartate + NADP(+) + H2O = oxaloacetate + NH4(+) + NADPH + H(+). The enzyme catalyses L-aspartate + NAD(+) + H2O = oxaloacetate + NH4(+) + NADH + H(+). It participates in cofactor biosynthesis; NAD(+) biosynthesis; iminoaspartate from L-aspartate (dehydrogenase route): step 1/1. Competitively inhibited by L-malate and NH(4)(+). Functionally, specifically catalyzes the NAD or NADP-dependent dehydrogenation of L-aspartate to iminoaspartate. Does not show aspartate oxidase activity. Is also able to catalyze the reverse reaction, i.e. the reductive amination of oxaloacetate. This chain is L-aspartate dehydrogenase, found in Thermotoga maritima (strain ATCC 43589 / DSM 3109 / JCM 10099 / NBRC 100826 / MSB8).